A 336-amino-acid chain; its full sequence is NADH-quinone oxidoreductase subunit H (336 aa).

The next 8 helical transmembrane spans lie at 12 to 32, 84 to 104, 118 to 138, 156 to 176, 193 to 213, 247 to 267, 274 to 294, and 313 to 333; these read FLKIVIVFSLALGIGAYLTWF, VVMALVPSILLLTIIPFGPGF, VNIALLLAFAFGSLSVYGTIF, AAVVIAYEVVLGFSVLGVILL, GVWFIFYQPVAFILYLFCMLA, LAEWYVNVIALSAIAVVLFFG, IFGPLSPYFWFVFKTFALVFF, and IAWKILLPIAILNVIITAVVV.

This sequence belongs to the complex I subunit 1 family. NDH-1 is composed of 14 different subunits. Subunits NuoA, H, J, K, L, M, N constitute the membrane sector of the complex.

It is found in the cell inner membrane. The catalysed reaction is a quinone + NADH + 5 H(+)(in) = a quinol + NAD(+) + 4 H(+)(out). In terms of biological role, NDH-1 shuttles electrons from NADH, via FMN and iron-sulfur (Fe-S) centers, to quinones in the respiratory chain. The immediate electron acceptor for the enzyme in this species is believed to be ubiquinone. Couples the redox reaction to proton translocation (for every two electrons transferred, four hydrogen ions are translocated across the cytoplasmic membrane), and thus conserves the redox energy in a proton gradient. This subunit may bind ubiquinone. The chain is NADH-quinone oxidoreductase subunit H from Aquifex aeolicus (strain VF5).